The chain runs to 282 residues: Cell division protein FtsQ (282 aa).

At 1–30 (MINIGPPKKRRLRRKGNRFKKTRRVIPWRR) the chain is on the cytoplasmic side. A helical transmembrane segment spans residues 31–51 (LMIGALWGTMALASLGMVVAV). The Periplasmic portion of the chain corresponds to 52 to 282 (ACFAGQMLFA…LDAGELRGKG (231 aa)). Residues 65–133 (FKVERIQVEN…DQLVIRVDER (69 aa)) form the POTRA domain.

Belongs to the FtsQ/DivIB family. FtsQ subfamily.

It localises to the cell inner membrane. In terms of biological role, essential cell division protein. The chain is Cell division protein FtsQ from Syntrophotalea carbinolica (strain DSM 2380 / NBRC 103641 / GraBd1) (Pelobacter carbinolicus).